Reading from the N-terminus, the 251-residue chain is Triosephosphate isomerase (251 aa).

12 to 14 serves as a coordination point for substrate; it reads NWK. H99 (electrophile) is an active-site residue. Residue E169 is the Proton acceptor of the active site. Residues G175, S214, and 235 to 236 contribute to the substrate site; that span reads GG.

This sequence belongs to the triosephosphate isomerase family. Homodimer.

The protein resides in the cytoplasm. It carries out the reaction D-glyceraldehyde 3-phosphate = dihydroxyacetone phosphate. The protein operates within carbohydrate biosynthesis; gluconeogenesis. It participates in carbohydrate degradation; glycolysis; D-glyceraldehyde 3-phosphate from glycerone phosphate: step 1/1. Involved in the gluconeogenesis. Catalyzes stereospecifically the conversion of dihydroxyacetone phosphate (DHAP) to D-glyceraldehyde-3-phosphate (G3P). The sequence is that of Triosephosphate isomerase from Bradyrhizobium sp. (strain BTAi1 / ATCC BAA-1182).